The chain runs to 217 residues: Large ribosomal subunit protein uL1 (217 aa).

The protein belongs to the universal ribosomal protein uL1 family.

This Drosophila melanogaster (Fruit fly) protein is Large ribosomal subunit protein uL1 (RpL10Ab).